Reading from the N-terminus, the 172-residue chain is Bifunctional protein PyrR (172 aa).

The short motif at 90-102 (LVLVDDVLMSGRT) is the PRPP-binding element.

This sequence belongs to the purine/pyrimidine phosphoribosyltransferase family. PyrR subfamily.

The enzyme catalyses UMP + diphosphate = 5-phospho-alpha-D-ribose 1-diphosphate + uracil. Functionally, regulates the transcription of the pyrimidine nucleotide (pyr) operon in response to exogenous pyrimidines. Its function is as follows. Also displays a weak uracil phosphoribosyltransferase activity which is not physiologically significant. This Pseudomonas entomophila (strain L48) protein is Bifunctional protein PyrR.